A 361-amino-acid polypeptide reads, in one-letter code: MLPLLLPLQLLLLMVMKGGHGCQGPELDRELVLAKVRALVLDALGPPNASKDGGKPVAQRLTRRHAHTGGSTRRSMENEDEDLSQVILFPTTGPGCEDEPEARAAEGLFTYTFRPSLHTRSRQVTAAQLWFHTGLDKVGAEVHNDSGPMVTLLAMSSGGPMAVPILLGPAPPHWAVLHLAAPAFTLLTRPLLVLLLRCPNCPCPAQLDATPFLVAHTRARPPSVGERARRSPLPPPWPWSPAALRLLQRPSEDPAAHADCHRAALNISFQELGWDQWIVHPPSFIFHYCHGGCGLVPSPVLSPGAALTPSQPLPLGPGSRPCCAAMPSTMRPLRVRTTSDGGYSFKYEIVPNLLTQHCACI.

The signal sequence occupies residues 1-21 (MLPLLLPLQLLLLMVMKGGHG). Residues 22 to 64 (CQGPELDRELVLAKVRALVLDALGPPNASKDGGKPVAQRLTRR) constitute a propeptide that is removed on maturation. A disordered region spans residues 45–82 (GPPNASKDGGKPVAQRLTRRHAHTGGSTRRSMENEDED). N-linked (GlcNAc...) asparagine glycosylation is found at Asn48, Asn144, and Asn266. Residues 65 to 230 (HAHTGGSTRR…PPSVGERARR (166 aa)) constitute a propeptide, inhibin alpha N-terminal region. 3 disulfides stabilise this stretch: Cys260–Cys323, Cys289–Cys358, and Cys293–Cys360.

This sequence belongs to the TGF-beta family. As to quaternary structure, dimeric, linked by one or more disulfide bonds. Activin B is a dimer of alpha and beta-B. Inhibin A is a dimer of alpha and beta-A. Inhibin B is a dimer of alpha and beta-B. Interacts with TGFBR3L; this interaction regulates female fertility. In terms of processing, proteolytic processing yields a number of bioactive forms, consisting either solely of the mature alpha chain, of the most N-terminal propeptide linked through a disulfide bond to the mature alpha chain, or of the entire proprotein.

It localises to the secreted. Functionally, inhibins and activins inhibit and activate, respectively, the secretion of follitropin by the pituitary gland. Inhibins/activins are involved in regulating a number of diverse functions such as hypothalamic and pituitary hormone secretion, gonadal hormone secretion, germ cell development and maturation, erythroid differentiation, insulin secretion, nerve cell survival, embryonic axial development or bone growth, depending on their subunit composition. Inhibins appear to oppose the functions of activins. In terms of biological role, inhibin A is a dimer of alpha/INHA and beta-A/INHBA that functions as a feedback regulator in the hypothalamic-pituitary-gonadal (HPG) axis. Inhibits the secretion of FSH from the anterior pituitary gland by acting on pituitary gonadotrope cells. Antagonizes activin A by binding to the proteoglycan, betaglycan, and forming a stable complex with and, thereby, sequestering type II activin receptors while excluding type I receptor. Its function is as follows. Inhibin B is a dimer of alpha and beta-B that plays a crucial role in the regulation of the reproductive system by inhibiting the secretion of follicle-stimulating hormone (FSH) from the anterior pituitary gland. Thereby, maintains reproductive homeostasis in both males and females. Acts as a more potent suppressor of FSH release than inhibin A. Functions as competitive receptor antagonist binding activin type II receptors with high affinity in the presence of the TGF-beta type III coreceptor/TGFBR3L. This Trichosurus vulpecula (Brush-tailed possum) protein is Inhibin alpha chain (INHA).